Reading from the N-terminus, the 240-residue chain is MFLKGYTSNVVLIILTFFILLTKEEKNIKNNISGYCFLNFGLKKNAIIKKREKQNLKLFCYNGIRIGQGYDIHKIKVLDEEYNTYANNDFNKNEQSFKTLTLGGVKINNVLVLSHSDGDIIYHSIVDSILGALGSLDIGTLFPDKDEKNKNKNSAIFLRYARLLIYKKNYDIGNVDINVIAQVPKISNIRKNIIKNISTVLNIDESQISVKGKTHEKLGVIGEKKAIECFANILLIPKNS.

The a divalent metal cation site is built by Asp-71 and His-73. Residues 71–73 and 115–116 contribute to the 4-CDP-2-C-methyl-D-erythritol 2-phosphate site; these read DIH and HS. His-123 contributes to the a divalent metal cation binding site. 4-CDP-2-C-methyl-D-erythritol 2-phosphate-binding positions include 137–139, 142–146, 181–187, and 212–214; these read DIG, FPDKD, AQVPKIS, and GKT.

Belongs to the IspF family. In terms of assembly, homotrimer. A divalent metal cation is required as a cofactor.

The protein localises to the plastid. The protein resides in the apicoplast. It carries out the reaction 4-CDP-2-C-methyl-D-erythritol 2-phosphate = 2-C-methyl-D-erythritol 2,4-cyclic diphosphate + CMP. The protein operates within isoprenoid biosynthesis; isopentenyl diphosphate biosynthesis via DXP pathway; isopentenyl diphosphate from 1-deoxy-D-xylulose 5-phosphate: step 4/6. In terms of biological role, in the mevalonate-independent isoprenoid biosynthetic pathway, converts 4-diphosphocytidyl-2C-methyl-D-erythritol 2-phosphate into 2C-methyl-D-erythritol 2,4-cyclodiphosphate and CMP. The sequence is that of 2-C-methyl-D-erythritol 2,4-cyclodiphosphate synthase, apicoplast from Plasmodium falciparum (isolate 3D7).